An 86-amino-acid polypeptide reads, in one-letter code: Long neurotoxin homolog (86 aa).

Residues 1–21 (MKTLLLTLVVVTIVCLALGYT) form the signal peptide. 5 disulfide bridges follow: Cys24–Cys45, Cys27–Cys32, Cys38–Cys63, Cys67–Cys78, and Cys79–Cys84.

It belongs to the three-finger toxin family. Ancestral subfamily. Orphan group II sub-subfamily. As to expression, expressed by the venom gland.

The protein resides in the secreted. In terms of biological role, binds with low affinity and weakly inhibits muscle nicotinic acetylcholine receptor (nAChR). This is Long neurotoxin homolog from Naja atra (Chinese cobra).